The following is a 515-amino-acid chain: Protein nucleotidyltransferase YdiU (515 aa).

8 residues coordinate ATP: Gly-101, Gly-103, Arg-104, Lys-124, Asp-136, Gly-137, Arg-194, and Arg-201. Residue Asp-269 is the Proton acceptor of the active site. Mg(2+) is bound by residues Asn-270 and Asp-279. Asp-279 is a binding site for ATP.

Belongs to the SELO family. The cofactor is Mg(2+). Requires Mn(2+) as cofactor.

It catalyses the reaction L-seryl-[protein] + ATP = 3-O-(5'-adenylyl)-L-seryl-[protein] + diphosphate. It carries out the reaction L-threonyl-[protein] + ATP = 3-O-(5'-adenylyl)-L-threonyl-[protein] + diphosphate. The enzyme catalyses L-tyrosyl-[protein] + ATP = O-(5'-adenylyl)-L-tyrosyl-[protein] + diphosphate. The catalysed reaction is L-histidyl-[protein] + UTP = N(tele)-(5'-uridylyl)-L-histidyl-[protein] + diphosphate. It catalyses the reaction L-seryl-[protein] + UTP = O-(5'-uridylyl)-L-seryl-[protein] + diphosphate. It carries out the reaction L-tyrosyl-[protein] + UTP = O-(5'-uridylyl)-L-tyrosyl-[protein] + diphosphate. In terms of biological role, nucleotidyltransferase involved in the post-translational modification of proteins. It can catalyze the addition of adenosine monophosphate (AMP) or uridine monophosphate (UMP) to a protein, resulting in modifications known as AMPylation and UMPylation. This Cytophaga hutchinsonii (strain ATCC 33406 / DSM 1761 / CIP 103989 / NBRC 15051 / NCIMB 9469 / D465) protein is Protein nucleotidyltransferase YdiU.